Reading from the N-terminus, the 308-residue chain is MSQQVIVTTKEQIQKMKKYYLSQLTSTPQGAIFRAKTNNAVITAYQSGKVLFQGSAPESEASKWGNVPLNDKKKHSLEQKHSYSPQAELFTDNHIGSDEAGTGDYFGPITVAALFATKEQQLKLKQIGVRDSKHLNDTKIKQIAKEIAHLQIPYSLLLLPNGKYNKLQAKGWSQGKMKAMLHHHAIDKLLQKIDVRSLKGIVIDQFCQPPVYKKYLQSEKKTLHPNTTFITKAESHSISVAAASILARARFVNAMDELSEEAKMELPKGASAKVDQTAARLIRSKGFEELDKYAKTHFANTQKAQKLL.

The RNase H type-2 domain occupies 92-308 (DNHIGSDEAG…ANTQKAQKLL (217 aa)). A divalent metal cation is bound by residues aspartate 98, glutamate 99, and aspartate 204.

Belongs to the RNase HII family. RnhC subfamily. Requires Mn(2+) as cofactor. Mg(2+) is required as a cofactor.

It is found in the cytoplasm. The catalysed reaction is Endonucleolytic cleavage to 5'-phosphomonoester.. Functionally, endonuclease that specifically degrades the RNA of RNA-DNA hybrids. The chain is Ribonuclease HIII from Oceanobacillus iheyensis (strain DSM 14371 / CIP 107618 / JCM 11309 / KCTC 3954 / HTE831).